The sequence spans 346 residues: Phosphoribosylformylglycinamidine cyclo-ligase (346 aa).

The protein belongs to the AIR synthase family.

The protein resides in the cytoplasm. The enzyme catalyses 2-formamido-N(1)-(5-O-phospho-beta-D-ribosyl)acetamidine + ATP = 5-amino-1-(5-phospho-beta-D-ribosyl)imidazole + ADP + phosphate + H(+). It functions in the pathway purine metabolism; IMP biosynthesis via de novo pathway; 5-amino-1-(5-phospho-D-ribosyl)imidazole from N(2)-formyl-N(1)-(5-phospho-D-ribosyl)glycinamide: step 2/2. The chain is Phosphoribosylformylglycinamidine cyclo-ligase from Synechococcus sp. (strain CC9311).